Consider the following 406-residue polypeptide: Alpha-1-antitrypsin (406 aa).

The first 24 residues, 1-24, serve as a signal peptide directing secretion; it reads MTSSISWGLLLLAGLCCLVPSFLA. Ser33 carries the post-translational modification Phosphoserine. N-linked (GlcNAc...) asparagine glycosylation is found at Asn59, Asn96, and Asn260. Residues 362-381 are RCL; sequence GTTVLEAVPMSIPPDVCFKN. Ser372 carries the post-translational modification Phosphoserine.

Belongs to the serpin family. Interacts with CELA2A. Interacts with ERGIC3 and LMAN1/ERGIC53. Interacts with PRSS1/Trypsin. In terms of tissue distribution, plasma.

The protein resides in the secreted. Its function is as follows. Inhibitor of serine proteases. Can inhibit elastase, trypsin, chymotrypsin and plasmin. The sequence is that of Alpha-1-antitrypsin from Meriones unguiculatus (Mongolian jird).